The primary structure comprises 371 residues: F-box protein At2g41170 (371 aa).

The F-box domain maps to 56-102 (KMSLLDLPDLTLDCILEKLSPSELCAMTSVCSELRDKCVSDHLWEKH).

In Arabidopsis thaliana (Mouse-ear cress), this protein is F-box protein At2g41170.